Consider the following 1244-residue polypeptide: MDRSEIVARENPVITQRVTNLLRTNAPLLFMPIDIHEVRYGAYMLFMYGSLENGYKAEVRIENIPVFFDVQIESDNTNQLFLKSLLAAENITYERLETLTQRPVMGYREKEKEFAPYIRIFFKSLYERRKAITYLNNMGYNTAADDTTCYYRMVSRELKLPLTTWIQLQHYSYEPRGLVHRFSVTPEDLVSYQDDGPTDHSIVMAYDIETYSPVKGTVPDPNQANDVVFMICMRIFWIHSTEPLASTCITMAPCKKSPEWTTIVCSSEKNLLLSFAEQFSRWAPDICTGFNDSRYDWPFIVEKSMQHGILEEVFNKMSLFWPQKLDTILKCYYVKEKRVKISAEKSIISSFLHTPGCLPIDVRNMCMQLYPKAEKTSLKAFLENCGLDSKVDLPYHLMWKYYETRDSEKMADVAYYCIIDAQRCQDLLVRHNVIPDRREVGILSYTSLYDCIYYAGGHKVCNMLIAYAIHDEYGRIACSTIARGKREHGKYPGAFVIDPVKGLEQDKPTTGLDFASLYPSLIMAYNFSPEKFVASRDEANSLMAKGESLHYVSFHFNNRLVEGWFVRHNNVPDKMGLYPKVLIDLLNKRTALKQELKKLGEKKECIHESHPGFKELQFRHAMVDAKQKALKIFMNTFYGEAGNNLSPFFLLPLAGGVTSSGQYNLKLVYNFVINKGYGIKYGDTDSLYITCPDSLYTEVTDAYLNSQKTTKHYEQLCHEKVLLSMKAMSTLCAEVNEYLRQDNGTSYLRMAYEEVLFPVCFTGKKKYYGIAHVNTPNFNTKELFIRGIDIIKQGQTKLTKTIGTRIMEESMKLRRPEDHRPPLIEIVKTVLKDAVVNMKQWNFEDFIQTDAWRPDKDNKAVQIFMSRMHARREQLKKHGAAATSQFAEPEPGERFSYVIVEKQVQFDIQGHRTDTTRKGDKMEYVSEAKAKNLPIDILFYINNYVLGLCARFINENEEFQPPGNVSNKDEYAQRRAKSYLQKFVQSIHPKDKSVIKQGIVHRQCYKYVHQEIKKKIGIFADLYKEFFNNTTNPIESFIQSTQFMIHYFDEEQKVNHSMKKMVEQHAALAGNPAGNPAGNPAGNPAGNPAGNPAGNPAGNPAGNPAGNPAGNPAGNPAGNPASNALMRAIFTQLITEEKKIVQALYNKGDEIHDLLTYIINNINYKIATFQTKQMLTFELSSTHVELLLKLNKTWLILVGIRVAKKHLHALLGLHNNEPPSKTFIQQAIEEECGSIKPSCYDFIS.

Repeat copies occupy residues 1069-1072 (AGNP), 1073-1076 (AGNP), 1077-1080 (AGNP), 1081-1084 (AGNP), 1085-1088 (AGNP), 1089-1092 (AGNP), 1093-1096 (AGNP), 1097-1100 (AGNP), 1101-1104 (AGNP), 1105-1108 (AGNP), 1109-1112 (AGNP), 1113-1116 (AGNP), and 1117-1120 (AGNP). A disordered region spans residues 1069 to 1118 (AGNPAGNPAGNPAGNPAGNPAGNPAGNPAGNPAGNPAGNPAGNPAGNPAG). Positions 1069 to 1120 (AGNPAGNPAGNPAGNPAGNPAGNPAGNPAGNPAGNPAGNPAGNPAGNPAGNP) are 13 X 4 AA tandem repeats of A-G-N-P.

It belongs to the DNA polymerase type-B family.

The enzyme catalyses DNA(n) + a 2'-deoxyribonucleoside 5'-triphosphate = DNA(n+1) + diphosphate. In terms of biological role, DNA-directed DNA polymerase involved in viral DNA replication. This African swine fever virus (isolate Pig/Portugal/Lis 60/1960) (ASFV) protein is DNA polymerase beta (DPOL).